An 87-amino-acid chain; its full sequence is Phosphoribosyl-ATP pyrophosphatase (87 aa).

This sequence belongs to the PRA-PH family.

The protein localises to the cytoplasm. The catalysed reaction is 1-(5-phospho-beta-D-ribosyl)-ATP + H2O = 1-(5-phospho-beta-D-ribosyl)-5'-AMP + diphosphate + H(+). It participates in amino-acid biosynthesis; L-histidine biosynthesis; L-histidine from 5-phospho-alpha-D-ribose 1-diphosphate: step 2/9. The sequence is that of Phosphoribosyl-ATP pyrophosphatase from Corynebacterium diphtheriae (strain ATCC 700971 / NCTC 13129 / Biotype gravis).